Consider the following 647-residue polypeptide: Threonine--tRNA ligase (647 aa).

The TGS domain occupies 1-63; sequence MADISIKFPD…ASDGSIEIVT (63 aa). Residues 242–540 are catalytic; the sequence is DHRVIGNQLD…LTEIYKGAFP (299 aa). Zn(2+)-binding residues include Cys336, His387, and His517.

The protein belongs to the class-II aminoacyl-tRNA synthetase family. Homodimer. It depends on Zn(2+) as a cofactor.

The protein localises to the cytoplasm. It catalyses the reaction tRNA(Thr) + L-threonine + ATP = L-threonyl-tRNA(Thr) + AMP + diphosphate + H(+). In terms of biological role, catalyzes the attachment of threonine to tRNA(Thr) in a two-step reaction: L-threonine is first activated by ATP to form Thr-AMP and then transferred to the acceptor end of tRNA(Thr). Also edits incorrectly charged L-seryl-tRNA(Thr). This is Threonine--tRNA ligase from Levilactobacillus brevis (strain ATCC 367 / BCRC 12310 / CIP 105137 / JCM 1170 / LMG 11437 / NCIMB 947 / NCTC 947) (Lactobacillus brevis).